The chain runs to 1235 residues: Major DNA-binding protein (1235 aa).

Residues 536-584 (GGLDGKGDDGVPGGGAGGGGGRDVSGGPSDGLGGGRGGGGGGDSGGMMG) are disordered. Residues 545 to 584 (GVPGGGAGGGGGRDVSGGPSDGLGGGRGGGGGGDSGGMMG) show a composition bias toward gly residues. The short motif at 846–847 (FW) is the Required for filament formation element. Residues 1214–1226 (GVGGSSGGGGGSG) show a composition bias toward gly residues. The disordered stretch occupies residues 1214-1235 (GVGGSSGGGGGSGLLPAKRSRL). Residues 1232–1235 (RSRL) form a required for nuclear localization region.

The protein belongs to the herpesviridae major DNA-binding protein family. Homooligomers. Forms double-helical filaments necessary for the formation of replication compartments within the host nucleus. Interacts with the origin-binding protein. Interacts with the helicase primase complex; this interaction stimulates primer synthesis activity of the helicase-primase complex. Interacts with the DNA polymerase. Interacts with the alkaline exonuclease; this interaction increases its nuclease processivity.

The protein localises to the host nucleus. Its function is as follows. Plays several crucial roles in viral infection. Participates in the opening of the viral DNA origin to initiate replication by interacting with the origin-binding protein. May disrupt loops, hairpins and other secondary structures present on ssDNA to reduce and eliminate pausing of viral DNA polymerase at specific sites during elongation. Promotes viral DNA recombination by performing strand-transfer, characterized by the ability to transfer a DNA strand from a linear duplex to a complementary single-stranded DNA circle. Can also catalyze the renaturation of complementary single strands. Additionally, reorganizes the host cell nucleus, leading to the formation of prereplicative sites and replication compartments. This process is driven by the protein which can form double-helical filaments in the absence of DNA. The protein is Major DNA-binding protein of Homo sapiens (Human).